The sequence spans 2292 residues: Protein Ycf2 (2292 aa).

G1644–S1651 contacts ATP.

The protein belongs to the Ycf2 family.

It localises to the plastid. The protein resides in the chloroplast stroma. Its function is as follows. Probable ATPase of unknown function. Its presence in a non-photosynthetic plant (Epifagus virginiana) and experiments in tobacco indicate that it has an essential function which is probably not related to photosynthesis. This is Protein Ycf2 from Morus indica (Mulberry).